A 247-amino-acid chain; its full sequence is Neurotrophic factor BDNF precursor form (247 aa).

The N-terminal stretch at 1-18 is a signal peptide; that stretch reads MTILFLTMVISYFGCMKA. Residues 19–128 constitute a propeptide that is removed on maturation; it reads APMKEASVRG…AANMSMRVRR (110 aa). N-linked (GlcNAc...) asparagine glycosylation occurs at asparagine 121. 3 cysteine pairs are disulfide-bonded: cysteine 141–cysteine 208, cysteine 186–cysteine 237, and cysteine 196–cysteine 239.

It belongs to the NGF-beta family. As to quaternary structure, monomers and homodimers. Binds to NTRK2/TRKB. Can form heterodimers with other neurotrophin family members, such as NTF3 and NTF4 (in vitro), but the physiological relevance of this is not clear. BDNF precursor form: interacts with the heterodimer formed by NGFR and SORCS2. Mature BDNF has much lower affinity for the heterodimer formed by NGFR and SORCS2. In terms of processing, N-glycosylated and glycosulfated, contrary to mature BDNF. Mature BDNF is produced by proteolytic removal of the propeptide, catalyzed by a FURIN family member. In addition, the precursor form is proteolytically cleaved within the propeptide, but this is not an obligatory intermediate for the production of mature BDNF. Can be converted into mature BDNF by plasmin (PLG).

It localises to the secreted. In terms of biological role, important signaling molecule that activates signaling cascades downstream of NTRK2. During development, promotes the survival and differentiation of selected neuronal populations of the peripheral and central nervous systems. Participates in axonal growth, pathfinding and in the modulation of dendritic growth and morphology. Major regulator of synaptic transmission and plasticity at adult synapses in many regions of the CNS. The versatility of BDNF is emphasized by its contribution to a range of adaptive neuronal responses including long-term potentiation (LTP), long-term depression (LTD), certain forms of short-term synaptic plasticity, as well as homeostatic regulation of intrinsic neuronal excitability. The sequence is that of Neurotrophic factor BDNF precursor form (BDNF) from Canis lupus familiaris (Dog).